A 780-amino-acid polypeptide reads, in one-letter code: APC membrane recruitment protein 3 (780 aa).

Residues 20–32 show a composition bias toward basic and acidic residues; that stretch reads KLIDSPAKEDPDK. Disordered stretches follow at residues 20–59, 341–407, 547–569, 582–617, 635–659, 706–729, and 749–780; these read KLIDSPAKEDPDKWPLSLGEQQRAYGEKSSQTSPCSQGYG, ELPL…FPRD, KGREDQATTCFPPSRQEPWAHSG, GEPARGSKTPSKDDSLEEGTQDFSEGQSSSEATMTS, KELGTPGNLRYSQGPLRPGHRGSAL, KNPISSKPNEAAGCGLSSSASPQD, and LGPQACSSVDSQPQQLCPRAPEQVPHRGSVGS. Positions 354–376 are enriched in polar residues; it reads SKASSIDTGTPKSEQPESVSTSD. Positions 602–617 are enriched in polar residues; that stretch reads QDFSEGQSSSEATMTS. Residues 753–763 show a composition bias toward polar residues; sequence ACSSVDSQPQQ.

This sequence belongs to the Amer family.

It is found in the cell membrane. In terms of biological role, regulator of the canonical Wnt signaling pathway. Acts by specifically binding phosphatidylinositol 4,5-bisphosphate (PtdIns(4,5)P2), translocating to the cell membrane. In Mus musculus (Mouse), this protein is APC membrane recruitment protein 3 (Amer3).